A 296-amino-acid chain; its full sequence is Formylmethanofuran--tetrahydromethanopterin formyltransferase (296 aa).

It belongs to the FTR family. As to quaternary structure, homotetramer composed of two dimers. Dimerization is sufficient for enzyme activity, but tetramerization is required for high thermostability.

It localises to the cytoplasm. It carries out the reaction N-formylmethanofuran + 5,6,7,8-tetrahydromethanopterin + H(+) = N(5)-formyl-5,6,7,8-tetrahydromethanopterin + methanofuran. It participates in one-carbon metabolism; methanogenesis from CO(2); 5,10-methenyl-5,6,7,8-tetrahydromethanopterin from CO(2): step 2/3. Requires high salt concentrations for activity and thermostability; 1.5-1.8 M KH(2)PO(4) stimulates activity while stabilizing the enzyme. Catalyzes the reversible transfer of a formyl group from formylmethanofuran (formyl-MFR) to tetrahydromethanopterin (H(4)MPT) to produce 5-formyl tetrahydromethanopterin (5-formyl-H(4)MPT) and methanofuran (MFR). Acts via a ternary-complex mechanism. Uses N-furfurylformamide much less efficiently, does not use N-methylformamide or formamide. Protein overexpressed in E.coli has very similar properties to enzyme purified from M.kandleri. The sequence is that of Formylmethanofuran--tetrahydromethanopterin formyltransferase from Methanopyrus kandleri (strain AV19 / DSM 6324 / JCM 9639 / NBRC 100938).